A 530-amino-acid chain; its full sequence is Ubiquitin carboxyl-terminal hydrolase 17-like protein 24 (530 aa).

A USP domain is found at 80 to 375 (AGLQNMGNTC…QAYVLFYIQK (296 aa)). C89 acts as the Nucleophile in catalysis. Residue H334 is the Proton acceptor of the active site. Basic and acidic residues-rich tracts occupy residues 382 to 392 (SESVSRGREPR) and 398 to 412 (DTDRRATQGELKRDH). Disordered stretches follow at residues 382 to 412 (SESVSRGREPRALGAEDTDRRATQGELKRDH) and 477 to 530 (NHHP…LVCQ). Residues 493–505 (TPTHQESMNTGTL) are compositionally biased toward polar residues. The span at 510–524 (GRARRSKGKNKHSKR) shows a compositional bias: basic residues.

The protein belongs to the peptidase C19 family. USP17 subfamily. Expressed in heart, brain, liver and skeletal muscle.

The protein resides in the nucleus. It localises to the nucleolus. Its subcellular location is the endoplasmic reticulum. The enzyme catalyses Thiol-dependent hydrolysis of ester, thioester, amide, peptide and isopeptide bonds formed by the C-terminal Gly of ubiquitin (a 76-residue protein attached to proteins as an intracellular targeting signal).. Functionally, deubiquitinating enzyme that removes conjugated ubiquitin from specific proteins to regulate different cellular processes that may include cell proliferation, progression through the cell cycle, apoptosis, cell migration, and the cellular response to viral infection. This is Ubiquitin carboxyl-terminal hydrolase 17-like protein 24 (USP17L24) from Homo sapiens (Human).